A 475-amino-acid chain; its full sequence is Phosphoglucosamine mutase (475 aa).

The active-site Phosphoserine intermediate is the Ser126. Mg(2+)-binding residues include Ser126, Asp265, Asp267, and Asp269. Phosphoserine is present on Ser126.

This sequence belongs to the phosphohexose mutase family. The cofactor is Mg(2+). Post-translationally, activated by phosphorylation.

The enzyme catalyses alpha-D-glucosamine 1-phosphate = D-glucosamine 6-phosphate. Catalyzes the conversion of glucosamine-6-phosphate to glucosamine-1-phosphate. This chain is Phosphoglucosamine mutase, found in Synechococcus sp. (strain ATCC 27144 / PCC 6301 / SAUG 1402/1) (Anacystis nidulans).